Consider the following 86-residue polypeptide: Testis-expressed protein 54 (86 aa).

A compositionally biased stretch (basic and acidic residues) spans 1–34 (MGCCQDKNRWASDEQARDEVTEDGREGNEVDNSG). Disordered stretches follow at residues 1–43 (MGCC…SNES) and 57–86 (SRRE…PEKG).

As to expression, expressed in Testis.

The protein is Testis-expressed protein 54 of Mus musculus (Mouse).